The sequence spans 86 residues: UPF0297 protein CA_C1679 (86 aa).

The protein belongs to the UPF0297 family.

The chain is UPF0297 protein CA_C1679 from Clostridium acetobutylicum (strain ATCC 824 / DSM 792 / JCM 1419 / IAM 19013 / LMG 5710 / NBRC 13948 / NRRL B-527 / VKM B-1787 / 2291 / W).